The chain runs to 342 residues: BAG family molecular chaperone regulator 1 (342 aa).

The segment at 1–41 (MMKMMRNKPTNLPTAGMTNGGRGSGGGGGGGGRESGGRDLE) is disordered. A compositionally biased stretch (polar residues) spans 8 to 17 (KPTNLPTAGM). Gly residues predominate over residues 18-34 (TNGGRGSGGGGGGGGRE). The region spanning 65–141 (PMIRVRIKYG…MVLIEDPLSQ (77 aa)) is the Ubiquitin-like domain. The BAG domain maps to 160–238 (AISDISLEVD…NYVETLDALK (79 aa)). Ser-298 carries the phosphoserine modification.

As to quaternary structure, binds to the ATPase domain of HSP70/HSC70 chaperones.

Functionally, co-chaperone that regulates diverse cellular pathways, such as programmed cell death and stress responses. The sequence is that of BAG family molecular chaperone regulator 1 (BAG1) from Arabidopsis thaliana (Mouse-ear cress).